Here is a 355-residue protein sequence, read N- to C-terminus: MGEEEKKPEAAEEKKMEEKKPEEKKEGEDKKVDAEKKGEDSDKKPQEGESNKDSKEDSAPAAPEAPAPPPPPQEVVLKVYMHCEGCARKVRRCLKGFEGVEDVMTDCKTGKVVVKGEKADPLKVLARVQRKTHRQVQLLSPIPPPPPPPEKKAEEDKPIVEEKKVEPPVVVTVVLKVHMHCEACATEIKKRIMRMKGVESAESDLKSSQVTVKGVFEPQKLVEYVYKRTGKHAAIMKIDPPPPPPPEEAAAAAEGEKKEEEKGEGESKGEEGKDDKAKTDEEKKEGDGGKGEGEAADNGGGEEEGKVVEVRKIENPYYYYYYQPPRVAIPPMEMPPHAYPPQLFSDENPNACTVM.

Basic and acidic residues predominate over residues M1–S58. A disordered region spans residues M1 to E74. Residues P63 to Q73 show a composition bias toward pro residues. 2 HMA domains span residues P72 to V136 and V170 to A234. A metal cation is bound by residues C83 and C86. Residues T132–K157 are disordered. 2 residues coordinate a metal cation: C181 and C184. The interval I235–V308 is disordered. Basic and acidic residues predominate over residues E254–G293. C352 is modified (cysteine methyl ester). The S-farnesyl cysteine moiety is linked to residue C352. Positions T353–M355 are cleaved as a propeptide — removed in mature form.

It belongs to the HIPP family. In terms of processing, efficiently farnesylated in vitro.

Its function is as follows. Heavy-metal-binding protein. Binds zinc, copper and nickel in a reversible manner. The protein is Heavy metal-associated isoprenylated plant protein 7 of Arabidopsis thaliana (Mouse-ear cress).